We begin with the raw amino-acid sequence, 389 residues long: Innexin-6 (389 aa).

4 consecutive transmembrane segments (helical) span residues 36-56 (VVIL…GDPI), 111-131 (VFAL…AMIA), 190-210 (LFYT…FYIL), and 276-296 (LFIF…VNCF).

Belongs to the pannexin family.

The protein resides in the cell membrane. It localises to the cell junction. The protein localises to the gap junction. In terms of biological role, structural component of the gap junctions. The polypeptide is Innexin-6 (inx-6) (Caenorhabditis elegans).